Here is a 380-residue protein sequence, read N- to C-terminus: Zinc metalloproteinase-like protein nas-21 (380 aa).

A signal peptide spans 1-24 (MNYFITFFFMHIAVLNFYFRFSNG). Residues 46 to 234 (QALRMDNEPR…LMINEYYQCS (189 aa)) form the Peptidase M12A domain. N-linked (GlcNAc...) asparagine glycosylation occurs at Asn-87. Cystine bridges form between Cys-90-Cys-233 and Cys-110-Cys-130. Glu-138 is an active-site residue. Residues Asn-253, Asn-269, Asn-283, and Asn-304 are each glycosylated (N-linked (GlcNAc...) asparagine).

It localises to the secreted. In terms of biological role, may lack metalloprotease activity. This chain is Zinc metalloproteinase-like protein nas-21 (nas-21), found in Caenorhabditis elegans.